We begin with the raw amino-acid sequence, 96 residues long: ASNSD1 upstream open reading frame protein (96 aa).

Basic and acidic residues predominate over residues 1–10 (MPSRGTRPED). The disordered stretch occupies residues 1–28 (MPSRGTRPEDSSVLIPTDNSTPHKEDLS). The stretch at 23–96 (HKEDLSSKIK…ENLDKTKIKK (74 aa)) forms a coiled coil.

As to quaternary structure, component of the PAQosome complex which is responsible for the biogenesis of several protein complexes and which consists of R2TP complex members RUVBL1, RUVBL2, RPAP3 and PIH1D1, URI complex members PFDN2, PFDN6, PDRG1, UXT and URI1 as well as ASDURF, POLR2E and DNAAF10/WDR92.

The protein localises to the cytoplasm. This is ASNSD1 upstream open reading frame protein from Homo sapiens (Human).